A 326-amino-acid chain; its full sequence is Type II methyltransferase M.CviAII (326 aa).

Belongs to the N(4)/N(6)-methyltransferase family.

It catalyses the reaction a 2'-deoxyadenosine in DNA + S-adenosyl-L-methionine = an N(6)-methyl-2'-deoxyadenosine in DNA + S-adenosyl-L-homocysteine + H(+). Its function is as follows. An alpha subtype methylase that recognizes the double-stranded sequence 5'-CATG-3', methylates A-2 on both strands and protects the DNA from cleavage by the CviAII endonuclease. This Paramecium bursaria Chlorella virus 1 (PBCV-1) protein is Type II methyltransferase M.CviAII (CVIAIIM).